The sequence spans 210 residues: BAG family molecular chaperone regulator 1 (210 aa).

The Ubiquitin-like domain maps to Ser8 to Leu85. Residues Ala108–Leu194 form the BAG domain.

Homodimer or homotetramer.

In terms of biological role, may inhibit the chaperone activity of HSP70/HSC70 by promoting substrate release in an ATP-dependent manner. The chain is BAG family molecular chaperone regulator 1 (bag-1) from Caenorhabditis elegans.